Here is a 262-residue protein sequence, read N- to C-terminus: tRNA pseudouridine synthase A (262 aa).

Aspartate 52 functions as the Nucleophile in the catalytic mechanism. Tyrosine 110 serves as a coordination point for substrate.

Belongs to the tRNA pseudouridine synthase TruA family. As to quaternary structure, homodimer.

The catalysed reaction is uridine(38/39/40) in tRNA = pseudouridine(38/39/40) in tRNA. Formation of pseudouridine at positions 38, 39 and 40 in the anticodon stem and loop of transfer RNAs. In Chromobacterium violaceum (strain ATCC 12472 / DSM 30191 / JCM 1249 / CCUG 213 / NBRC 12614 / NCIMB 9131 / NCTC 9757 / MK), this protein is tRNA pseudouridine synthase A.